We begin with the raw amino-acid sequence, 448 residues long: Tubulin alpha chain, nucleomorph (448 aa).

Gln-11, Glu-71, Ser-140, Gly-144, Thr-145, Thr-179, Asn-206, and Asn-228 together coordinate GTP. Glu-71 provides a ligand contact to Mg(2+). Glu-254 is an active-site residue.

The protein belongs to the tubulin family. In terms of assembly, dimer of alpha and beta chains. A typical microtubule is a hollow water-filled tube with an outer diameter of 25 nm and an inner diameter of 15 nM. Alpha-beta heterodimers associate head-to-tail to form protofilaments running lengthwise along the microtubule wall with the beta-tubulin subunit facing the microtubule plus end conferring a structural polarity. Microtubules usually have 13 protofilaments but different protofilament numbers can be found in some organisms and specialized cells. The cofactor is Mg(2+).

The catalysed reaction is GTP + H2O = GDP + phosphate + H(+). Functionally, tubulin is the major constituent of microtubules, a cylinder consisting of laterally associated linear protofilaments composed of alpha- and beta-tubulin heterodimers. Microtubules grow by the addition of GTP-tubulin dimers to the microtubule end, where a stabilizing cap forms. Below the cap, tubulin dimers are in GDP-bound state, owing to GTPase activity of alpha-tubulin. The sequence is that of Tubulin alpha chain, nucleomorph (tubA) from Guillardia theta (Cryptophyte).